The following is a 105-amino-acid chain: Phosphoribosyl-ATP pyrophosphatase (105 aa).

It belongs to the PRA-PH family.

Its subcellular location is the cytoplasm. It catalyses the reaction 1-(5-phospho-beta-D-ribosyl)-ATP + H2O = 1-(5-phospho-beta-D-ribosyl)-5'-AMP + diphosphate + H(+). Its pathway is amino-acid biosynthesis; L-histidine biosynthesis; L-histidine from 5-phospho-alpha-D-ribose 1-diphosphate: step 2/9. The polypeptide is Phosphoribosyl-ATP pyrophosphatase (Roseobacter denitrificans (strain ATCC 33942 / OCh 114) (Erythrobacter sp. (strain OCh 114))).